A 353-amino-acid polypeptide reads, in one-letter code: Nicotinate-nucleotide--dimethylbenzimidazole phosphoribosyltransferase (353 aa).

E318 functions as the Proton acceptor in the catalytic mechanism.

It belongs to the CobT family.

It carries out the reaction 5,6-dimethylbenzimidazole + nicotinate beta-D-ribonucleotide = alpha-ribazole 5'-phosphate + nicotinate + H(+). It participates in nucleoside biosynthesis; alpha-ribazole biosynthesis; alpha-ribazole from 5,6-dimethylbenzimidazole: step 1/2. In terms of biological role, catalyzes the synthesis of alpha-ribazole-5'-phosphate from nicotinate mononucleotide (NAMN) and 5,6-dimethylbenzimidazole (DMB). In Desulforudis audaxviator (strain MP104C), this protein is Nicotinate-nucleotide--dimethylbenzimidazole phosphoribosyltransferase.